Reading from the N-terminus, the 288-residue chain is Histone H3-like centromeric protein hcp-3 (288 aa).

The segment at 96–194 is disordered; sequence YHARKEQARR…VTKTRRYRPG (99 aa). Positions 178–193 are enriched in basic residues; that stretch reads MRAGRNRVTKTRRYRP. The segment at 191–288 is H3-like; it reads YRPGQKALEE…LYRRLCLRHL (98 aa).

It belongs to the histone H3 family. Forms a nucleosome-like histone octamer containing two molecules each of H2A, H2B, hcp-3 and H4 assembled in one hcp-3-H4 heterotetramer and two H2A-H2B heterodimers. The hcp-3-H4 heterotetramer is more compact and structurally more rigid than corresponding H3-H4 heterotetramers. Interacts with knl-2. Interacts with lin-53.

The protein resides in the nucleus. The protein localises to the chromosome. It is found in the centromere. Its subcellular location is the kinetochore. Histone H3-like variant which exclusively replaces conventional H3 in the nucleosome core of centromeric chromatin at the inner plate of the kinetochore. Required for recruitment and assembly of kinetochore proteins, mitotic progression and chromosome segregation. May serve as an epigenetic mark that propagates centromere identity through replication and cell division. Might promote cleavage furrow stability during cytokinesis. Not required for chromosome segregation during meiosis. The chain is Histone H3-like centromeric protein hcp-3 from Caenorhabditis elegans.